A 311-amino-acid chain; its full sequence is Olfactory receptor 10G9 (311 aa).

Residues 1–23 (MSKTSLVTAFILTGLPHAPGLDA) lie on the Extracellular side of the membrane. The helical transmembrane segment at 24–44 (PLFGIFLVVYVLTVLGNLLIL) threads the bilayer. The Cytoplasmic segment spans residues 45–52 (LVIRVDSH). A helical transmembrane segment spans residues 53-73 (LHTPMYYFLTNLSFIDMWFST). Over 74–98 (VTVPKMLMTLVSPSGRAISFHSCVA) the chain is Extracellular. Cysteines 96 and 188 form a disulfide. Residues 99 to 119 (QLYFFHFLGSTECFLYTVMSY) traverse the membrane as a helical segment. Topologically, residues 120–138 (DRYLAISYPLRYTSMMSGS) are cytoplasmic. A helical membrane pass occupies residues 139–159 (RCALLATSTWLSGSLHSAVQT). Topologically, residues 160 to 196 (ILTFHLPYCGPNQIQHYLCDAPPILKLACADTSANEM) are extracellular. A helical transmembrane segment spans residues 197-216 (VIFVDIGLVASGCFLLIVLS). The Cytoplasmic portion of the chain corresponds to 217 to 236 (YVSIVCSILRIHTSEGRHRA). A helical membrane pass occupies residues 237-257 (FQTCASHCIVVLCFFVPCVFI). Residues 258 to 268 (YLRPGSRDVVD) are Extracellular-facing. The helical transmembrane segment at 269–289 (GVVAIFYTVLTPLLNPVVYTL) threads the bilayer. The Cytoplasmic portion of the chain corresponds to 290–311 (RNKEVKKAVLKLRDKVAHSQGE).

It belongs to the G-protein coupled receptor 1 family.

Its subcellular location is the cell membrane. Its function is as follows. Odorant receptor. This Homo sapiens (Human) protein is Olfactory receptor 10G9 (OR10G9).